We begin with the raw amino-acid sequence, 117 residues long: Prefoldin subunit beta (117 aa).

This sequence belongs to the prefoldin subunit beta family. Heterohexamer of two alpha and four beta subunits.

Its subcellular location is the cytoplasm. Its function is as follows. Molecular chaperone capable of stabilizing a range of proteins. Seems to fulfill an ATP-independent, HSP70-like function in archaeal de novo protein folding. The chain is Prefoldin subunit beta from Methanosarcina mazei (strain ATCC BAA-159 / DSM 3647 / Goe1 / Go1 / JCM 11833 / OCM 88) (Methanosarcina frisia).